Here is a 110-residue protein sequence, read N- to C-terminus: MSALLVEIDKDQFQAEVLEAEGYVLVDYFSDGCVPCKALMPDVEELAAKYEGKVAFRKFNTSSARRLAISQKILGLPTITLYKGGQKVEEVTKDDATRENIDAMIAKHVG.

The region spanning 2-110 (SALLVEIDKD…IDAMIAKHVG (109 aa)) is the Thioredoxin domain. An intrachain disulfide couples cysteine 33 to cysteine 36.

Belongs to the thioredoxin family.

Functionally, participates in various redox reactions through the reversible oxidation of its active center dithiol to a disulfide and catalyzes dithiol-disulfide exchange reactions. The polypeptide is Thioredoxin (trxA) (Peptoclostridium acidaminophilum (Eubacterium acidaminophilum)).